Here is a 92-residue protein sequence, read N- to C-terminus: RNA-binding protein Hfq (92 aa).

Residues 9–68 (DPFLNALRRERVPVSIYLVNGIKLQGQVESFDQFVILLKNTVSQMVYKHAISTVVPSRPF) enclose the Sm domain. A compositionally biased stretch (polar residues) spans 73–82 (HQATNAQAGY). Residues 73 to 92 (HQATNAQAGYNAQHDDGDEK) are disordered.

It belongs to the Hfq family. As to quaternary structure, homohexamer.

Its function is as follows. RNA chaperone that binds small regulatory RNA (sRNAs) and mRNAs to facilitate mRNA translational regulation in response to envelope stress, environmental stress and changes in metabolite concentrations. Also binds with high specificity to tRNAs. In Shewanella pealeana (strain ATCC 700345 / ANG-SQ1), this protein is RNA-binding protein Hfq.